Reading from the N-terminus, the 78-residue chain is Beta-defensin 105A (78 aa).

Residues methionine 1–alanine 27 form the signal peptide. 3 disulfides stabilise this stretch: cysteine 46/cysteine 74, cysteine 53/cysteine 67, and cysteine 57/cysteine 73.

This sequence belongs to the beta-defensin family.

It localises to the secreted. Has antimicrobial activity. The polypeptide is Beta-defensin 105A (DEFB105A) (Hylobates lar (Lar gibbon)).